A 350-amino-acid polypeptide reads, in one-letter code: Putative ankyrin repeat protein RBE_0589 (350 aa).

ANK repeat units follow at residues 81-110 (DGFT…NPNI), 114-151 (DIVT…EPTD), and 153-182 (SGWT…NLDI).

The chain is Putative ankyrin repeat protein RBE_0589 from Rickettsia bellii (strain RML369-C).